A 132-amino-acid polypeptide reads, in one-letter code: Small ribosomal subunit protein uS11 (132 aa).

Belongs to the universal ribosomal protein uS11 family. Part of the 30S ribosomal subunit.

In terms of biological role, located on the platform of the 30S subunit. The protein is Small ribosomal subunit protein uS11 of Caldivirga maquilingensis (strain ATCC 700844 / DSM 13496 / JCM 10307 / IC-167).